We begin with the raw amino-acid sequence, 426 residues long: Fc receptor-like B (426 aa).

An N-terminal signal peptide occupies residues 1–17 (MWPLTALLLLVPSSGQA). Ig-like C2-type domains follow at residues 23-101 (PILS…LSVS) and 103-189 (DWLI…VAVT). Disulfide bonds link C44-C85 and C124-C168. The N-linked (GlcNAc...) asparagine glycan is linked to N152. Positions 400-426 (ELRGTPETPTSHFAVSPGTPETTPVES) are disordered. Polar residues predominate over residues 406–426 (ETPTSHFAVSPGTPETTPVES).

In terms of tissue distribution, expressed at low levels. Expressed in B-lymphocytes. Detected in tonsil, lung, kidney, spleen and placenta. Expressed by a small subset of germinal center B-cells in tonsils and by melanocytes (at protein level).

The protein resides in the cytoplasm. It localises to the endoplasmic reticulum. In Homo sapiens (Human), this protein is Fc receptor-like B (FCRLB).